Reading from the N-terminus, the 352-residue chain is Uroporphyrinogen decarboxylase (352 aa).

Residues 27–31 (RQAGR), Asp-77, Tyr-154, Thr-209, and His-325 contribute to the substrate site.

Belongs to the uroporphyrinogen decarboxylase family. In terms of assembly, homodimer.

The protein localises to the cytoplasm. The catalysed reaction is uroporphyrinogen III + 4 H(+) = coproporphyrinogen III + 4 CO2. It participates in porphyrin-containing compound metabolism; protoporphyrin-IX biosynthesis; coproporphyrinogen-III from 5-aminolevulinate: step 4/4. In terms of biological role, catalyzes the decarboxylation of four acetate groups of uroporphyrinogen-III to yield coproporphyrinogen-III. The polypeptide is Uroporphyrinogen decarboxylase (Legionella pneumophila (strain Corby)).